Reading from the N-terminus, the 243-residue chain is Pyridoxine 5'-phosphate synthase (243 aa).

N9 lines the 3-amino-2-oxopropyl phosphate pocket. 11–12 (DH) is a binding site for 1-deoxy-D-xylulose 5-phosphate. 3-amino-2-oxopropyl phosphate is bound at residue R20. Residue H45 is the Proton acceptor of the active site. Residues R47 and H52 each contribute to the 1-deoxy-D-xylulose 5-phosphate site. The active-site Proton acceptor is E72. T102 contributes to the 1-deoxy-D-xylulose 5-phosphate binding site. H193 acts as the Proton donor in catalysis. 3-amino-2-oxopropyl phosphate contacts are provided by residues G194 and 215–216 (GH).

It belongs to the PNP synthase family. Homooctamer; tetramer of dimers.

The protein localises to the cytoplasm. It carries out the reaction 3-amino-2-oxopropyl phosphate + 1-deoxy-D-xylulose 5-phosphate = pyridoxine 5'-phosphate + phosphate + 2 H2O + H(+). Its pathway is cofactor biosynthesis; pyridoxine 5'-phosphate biosynthesis; pyridoxine 5'-phosphate from D-erythrose 4-phosphate: step 5/5. Its function is as follows. Catalyzes the complicated ring closure reaction between the two acyclic compounds 1-deoxy-D-xylulose-5-phosphate (DXP) and 3-amino-2-oxopropyl phosphate (1-amino-acetone-3-phosphate or AAP) to form pyridoxine 5'-phosphate (PNP) and inorganic phosphate. The chain is Pyridoxine 5'-phosphate synthase from Photorhabdus laumondii subsp. laumondii (strain DSM 15139 / CIP 105565 / TT01) (Photorhabdus luminescens subsp. laumondii).